The sequence spans 291 residues: MNWFTKLLPKISTAKKKGVPEGVWHKCPSCTAVLYRVELERNLEVCPKCYYHIRLDPRKRLAQFLDEGEQEELAEDILPVDRLKFRDSKKYKDRLSAAQKATEEKEALVVYKGNIYGNPIVAAAFNFFFVGGSMGAAVGERFAAGVEAAISERLPFVCFSTSGGARMQEGLFSLFQMAKTSAVLARLAEYKLPYISVLTDPTMGGVSASLAMLGDVIIAEPNALIGFSGPRVIEQTIRQTLPEGFQRSEFLLEHGAIDMVVDRRELKSTIASLITKLTHQPPPDLPVEESV.

The CoA carboxyltransferase N-terminal domain occupies 23–291 (VWHKCPSCTA…PPDLPVEESV (269 aa)). Residues Cys-27, Cys-30, Cys-46, and Cys-49 each coordinate Zn(2+). Residues 27-49 (CPSCTAVLYRVELERNLEVCPKC) form a C4-type zinc finger.

This sequence belongs to the AccD/PCCB family. In terms of assembly, acetyl-CoA carboxylase is a heterohexamer composed of biotin carboxyl carrier protein (AccB), biotin carboxylase (AccC) and two subunits each of ACCase subunit alpha (AccA) and ACCase subunit beta (AccD). It depends on Zn(2+) as a cofactor.

The protein resides in the cytoplasm. The enzyme catalyses N(6)-carboxybiotinyl-L-lysyl-[protein] + acetyl-CoA = N(6)-biotinyl-L-lysyl-[protein] + malonyl-CoA. It functions in the pathway lipid metabolism; malonyl-CoA biosynthesis; malonyl-CoA from acetyl-CoA: step 1/1. Its function is as follows. Component of the acetyl coenzyme A carboxylase (ACC) complex. Biotin carboxylase (BC) catalyzes the carboxylation of biotin on its carrier protein (BCCP) and then the CO(2) group is transferred by the transcarboxylase to acetyl-CoA to form malonyl-CoA. The polypeptide is Acetyl-coenzyme A carboxylase carboxyl transferase subunit beta (Coxiella burnetii (strain Dugway 5J108-111)).